The following is a 306-amino-acid chain: MIFQRTVKEMVKTIGVGLHSGNKVTLSIKPAPVNSGIVLVRTDLEPAVSIPAKAELVRETTMCTALVNDDGIRISTIEHLFAALAGLGIDNAIIEVDAPEIPIMDGSASPFVFLLQSVGIQEQAAPKKYLRIKKNIRVEDGDKWVELKPYKGFKIDFTIDFEHPVIARSEQHMKMEFSSSAFIRDISRARTFGFMRDIEYLRANNLALGGSMENAVVLDEYKVLNPDGLRYEDEFVKHKILDAFGDLYVAGYAIVGEFCAYKTGHALNNRLVRALLAQQDAWELVSFETEREAPVSFSVPSGAVFA.

Zn(2+)-binding residues include His79, His238, and Asp242. The active-site Proton donor is the His265.

The protein belongs to the LpxC family. It depends on Zn(2+) as a cofactor.

It catalyses the reaction a UDP-3-O-[(3R)-3-hydroxyacyl]-N-acetyl-alpha-D-glucosamine + H2O = a UDP-3-O-[(3R)-3-hydroxyacyl]-alpha-D-glucosamine + acetate. It participates in glycolipid biosynthesis; lipid IV(A) biosynthesis; lipid IV(A) from (3R)-3-hydroxytetradecanoyl-[acyl-carrier-protein] and UDP-N-acetyl-alpha-D-glucosamine: step 2/6. In terms of biological role, catalyzes the hydrolysis of UDP-3-O-myristoyl-N-acetylglucosamine to form UDP-3-O-myristoylglucosamine and acetate, the committed step in lipid A biosynthesis. This chain is UDP-3-O-acyl-N-acetylglucosamine deacetylase, found in Shewanella violacea (strain JCM 10179 / CIP 106290 / LMG 19151 / DSS12).